Here is an 833-residue protein sequence, read N- to C-terminus: P protein (833 aa).

Residues 1–172 (MRLENKDIRL…QVSKLGCCVR (172 aa)) are Cytoplasmic-facing. A helical membrane pass occupies residues 173–193 (WIKITGLFVFVVLCSILFSLY). The Extracellular segment spans residues 194–325 (PDQGKFWQLL…QFLGASVEAQ (132 aa)). N210, N214, and N269 each carry an N-linked (GlcNAc...) asparagine glycan. Residues 326 to 346 (VASAVAILAGVYTLIIFEIVH) form a helical membrane-spanning segment. The Cytoplasmic segment spans residues 347 to 348 (RT). The chain crosses the membrane as a helical span at residues 349–369 (LAAMLGALAALAALAVVGDRP). Residues 370-381 (SLTHVVEWIDFE) lie on the Extracellular side of the membrane. A helical membrane pass occupies residues 382–402 (TLALLFGMMILVAVFSETGFF). At 403-417 (DYCAVKAYQLSRGRV) the chain is on the cytoplasmic side. A helical transmembrane segment spans residues 418–438 (WAMIFMLCLMAAILSAFLDNV). The Extracellular segment spans residues 439–501 (TTMLLFTPVT…ELRKMGLDFA (63 aa)). The helical transmembrane segment at 502 to 522 (GFTAHMFLGICLVLLVSFPLL) threads the bilayer. Over 523–617 (RLLYWNKKLY…RKHRISDRSL (95 aa)) the chain is Cytoplasmic. The helical transmembrane segment at 618-638 (LVKCLTVLGFVISMFFLNSFV) threads the bilayer. A topological domain (extracellular) is located at residue P639. The helical transmembrane segment at 640–660 (GIHLDLGWIAILGAIWLLILA) threads the bilayer. At 661-675 (DIHDFEIILHRVEWA) the chain is on the cytoplasmic side. Residues 676–696 (TLLFFAALFVLMEALTHLHLV) form a helical membrane-spanning segment. The Extracellular portion of the chain corresponds to 697-718 (EYVGEQTALLIKMVPEDQRFAA). Residues 719 to 739 (AIVLIVWVSALASSLIDNIPF) form a helical membrane-spanning segment. Residues 740 to 759 (TATMIPVLLNLSQDPEISLP) lie on the Cytoplasmic side of the membrane. The helical transmembrane segment at 760-780 (ALPLMYALALGACLGGNGTLI) threads the bilayer. At 781 to 810 (GASTNVVCAGIAEKHGYGFSFMEFFRLGFP) the chain is on the extracellular side. The helical transmembrane segment at 811–831 (VMLMSCTIGMCYLLIAHIVVG) threads the bilayer. Residues 832–833 (WN) lie on the Cytoplasmic side of the membrane.

The protein belongs to the CitM (TC 2.A.11) transporter family. In terms of tissue distribution, most abundant in melanocytes. Also present in neonatal and adult eye tissue presumably as a result of expression in the retinal pigmented epithelium and choroid body, known sites of melanogenesis in the eye. Small but detectable amounts also observed in fetal, neonatal and adult brain. Moderate amounts detected in adult testis and ovary. Not detected in heart, kidney, spleen, liver or thymus.

The protein resides in the melanosome membrane. The enzyme catalyses chloride(in) = chloride(out). Contributes to a melanosome-specific anion (chloride) current that modulates melanosomal pH for optimal tyrosinase activity required for melanogenesis and the melanosome maturation. One of the components of the mammalian pigmentary system. May serve as a key control point at which color variation is determined. Major determinant of eye color. Seems to regulate the post-translational processing of tyrosinase, which catalyzes the limiting reaction in melanin synthesis. The chain is P protein (Oca2) from Mus musculus (Mouse).